The primary structure comprises 551 residues: Probable alpha-glucosidase (551 aa).

Asp-212 functions as the Nucleophile in the catalytic mechanism. Glu-272 acts as the Proton donor in catalysis.

This sequence belongs to the glycosyl hydrolase 13 family.

The enzyme catalyses Hydrolysis of terminal, non-reducing (1-&gt;4)-linked alpha-D-glucose residues with release of alpha-D-glucose.. This is Probable alpha-glucosidase (aglA) from Rhizobium meliloti (strain 1021) (Ensifer meliloti).